The following is an 897-amino-acid chain: Putative POM121-like protein 1-like (897 aa).

Residues 1-19 (MPEQDKDPRVQENPDDQRT) are compositionally biased toward basic and acidic residues. Disordered stretches follow at residues 1 to 177 (MPEQ…LPPP), 211 to 252 (IPDC…PKSQ), 266 to 302 (EVPSTAPVSGKKHRPPGPLFSSSDPLPATSYHSRDTA), 315 to 348 (ASRDAGMRRTRSAPAAATAAPPPSTLNNTSGSLL), 362 to 469 (ATAA…ASRP), 484 to 522 (DCRPSRPSHTLSSLATGASGGPPVSKAPTMDAQQDRPKS), 536 to 612 (AEVP…LPPS), 642 to 741 (AQRS…ASRP), 753 to 793 (AISD…DRPK), and 812 to 856 (STAP…APFT). Over residues 54–65 (LHAQSSEIRYNH) the composition is skewed to polar residues. The span at 66-76 (TSQTSWTSSST) shows a compositional bias: low complexity. Composition is skewed to polar residues over residues 77–89 (KRNAISSSYSSTG), 103–114 (SRCQLTLSYSKT), and 219–228 (PSHTLSSLAT). Polar residues-rich tracts occupy residues 376–385 (NQRSQTSRTR), 417–430 (SHCQLAHSSSNTVS), 490–499 (PSHTLSSLAT), and 556–579 (FSSSDPLPATSSHSRDSAQVTSLI). Residues 599 to 612 (TSAPAAAAAALPPS) show a composition bias toward low complexity. 4 stretches are compositionally biased toward polar residues: residues 650 to 676 (NQRSQTSRTRSCLKRNASSSSHSSTEG), 689 to 702 (SHCQLAHSSSNTVS), 762 to 771 (PSHTLSSLAT), and 828 to 849 (FSSSDPLPATSSHSGDSAQDTS). A helical transmembrane segment spans residues 877–897 (LGLFLLVFSFFFLLTWASFSF).

This sequence belongs to the POM121 family.

It localises to the membrane. The protein is Putative POM121-like protein 1-like of Homo sapiens (Human).